The chain runs to 1015 residues: Translation initiation factor IF-2 (1015 aa).

4 disordered regions span residues 124–144, 159–179, 196–230, and 250–386; these read EKEP…EKKV, EVTV…PKPV, KKEE…KEEE, and IDLA…VSEE. 2 stretches are compositionally biased toward basic and acidic residues: residues 196-217 and 265-315; these read KKEE…EKPV and SKEE…DPNG. The tr-type G domain maps to 514–684; it reads HRAPIVTVMG…LLEAEMLDLK (171 aa). Positions 523 to 530 are G1; that stretch reads GHVDHGKT. 523-530 contacts GTP; that stretch reads GHVDHGKT. The tract at residues 548 to 552 is G2; the sequence is GITQH. Residues 570 to 573 are G3; that stretch reads DTPG. Residues 570–574 and 624–627 contribute to the GTP site; these read DTPGH and NKID. Residues 624–627 are G4; sequence NKID. A G5 region spans residues 660 to 662; sequence SAK.

It belongs to the TRAFAC class translation factor GTPase superfamily. Classic translation factor GTPase family. IF-2 subfamily.

The protein resides in the cytoplasm. One of the essential components for the initiation of protein synthesis. Protects formylmethionyl-tRNA from spontaneous hydrolysis and promotes its binding to the 30S ribosomal subunits. Also involved in the hydrolysis of GTP during the formation of the 70S ribosomal complex. This chain is Translation initiation factor IF-2, found in Bacteroides fragilis (strain ATCC 25285 / DSM 2151 / CCUG 4856 / JCM 11019 / LMG 10263 / NCTC 9343 / Onslow / VPI 2553 / EN-2).